The following is a 308-amino-acid chain: Glycine betaine uptake system ATP-binding protein YehX (308 aa).

The region spanning I2–F235 is the ABC transporter domain. Position 34 to 41 (G34 to S41) interacts with ATP.

Belongs to the ABC transporter superfamily. The complex is composed of two ATP-binding proteins (YehX), two transmembrane proteins (YehW and YehY) and a solute-binding protein (YehZ).

It carries out the reaction glycine betaine(out) + ATP + H2O = glycine betaine(in) + ADP + phosphate + H(+). Its function is as follows. Part of an ABC transporter complex involved in low-affinity glycine betaine uptake. Probably responsible for energy coupling to the transport system. This Escherichia coli (strain K12) protein is Glycine betaine uptake system ATP-binding protein YehX (yehX).